We begin with the raw amino-acid sequence, 203 residues long: CASP-like protein 2U6 (203 aa).

At 1–31 (MSEHRIPVAADKKISPPISAGEQKGCKGLKR) the chain is on the cytoplasmic side. The chain crosses the membrane as a helical span at residues 32–52 (TDLMLRFAAFVCCTVTMVVLI). Residues 53–84 (TDKQTSAIQVPGFNNLTITKTVSFDLAKAFVY) lie on the Extracellular side of the membrane. Asparagine 67 is a glycosylation site (N-linked (GlcNAc...) asparagine). Residues 85–105 (LVSAAGIGAGYTLLVLVLSII) form a helical membrane-spanning segment. Topologically, residues 106–111 (SAERSK) are cytoplasmic. A helical transmembrane segment spans residues 112 to 132 (AIAWFIFVFDQLITYVLLAAA). At 133–164 (AASTEVAYMGAHAPPEASWLKVCSLFGRFCHQ) the chain is on the extracellular side. Residues 165 to 185 (LGASLVTSLISTVLFAFSAAI) form a helical membrane-spanning segment. The Cytoplasmic portion of the chain corresponds to 186-203 (SAYYLFSNTNVRPAYSKG).

It belongs to the Casparian strip membrane proteins (CASP) family. In terms of assembly, homodimer and heterodimers.

Its subcellular location is the cell membrane. The polypeptide is CASP-like protein 2U6 (Selaginella moellendorffii (Spikemoss)).